We begin with the raw amino-acid sequence, 720 residues long: Aminopeptidase RNPEPL1 (720 aa).

Substrate is bound at residue 321–325; the sequence is VAMEN. A Zn(2+)-binding site is contributed by His-348. Catalysis depends on Glu-349, which acts as the Proton acceptor. Zn(2+) contacts are provided by His-352 and Glu-371. Positions 671–708 are disordered; it reads GLGPSAEPSTEPSTDLGGAEADTNPDSPALLLGDEAPS.

This sequence belongs to the peptidase M1 family. Zn(2+) serves as cofactor.

The catalysed reaction is Release of N-terminal amino acids, preferentially methionine, from peptides and arylamides.. Broad specificity aminopeptidase which preferentially hydrolyzes an N-terminal methionine, citrulline or glutamine. This is Aminopeptidase RNPEPL1 from Mus musculus (Mouse).